The sequence spans 632 residues: DNA gyrase subunit B (632 aa).

A Toprim domain is found at 419–533 (RELFIVEGES…SGYLYIAQPP (115 aa)). Glu-425, Asp-498, and Asp-500 together coordinate Mg(2+).

This sequence belongs to the type II topoisomerase GyrB family. As to quaternary structure, heterotetramer, composed of two GyrA and two GyrB chains. In the heterotetramer, GyrA contains the active site tyrosine that forms a transient covalent intermediate with DNA, while GyrB binds cofactors and catalyzes ATP hydrolysis. Mg(2+) is required as a cofactor. Mn(2+) serves as cofactor. The cofactor is Ca(2+).

Its subcellular location is the cytoplasm. The enzyme catalyses ATP-dependent breakage, passage and rejoining of double-stranded DNA.. Functionally, a type II topoisomerase that negatively supercoils closed circular double-stranded (ds) DNA in an ATP-dependent manner to modulate DNA topology and maintain chromosomes in an underwound state. Negative supercoiling favors strand separation, and DNA replication, transcription, recombination and repair, all of which involve strand separation. Also able to catalyze the interconversion of other topological isomers of dsDNA rings, including catenanes and knotted rings. Type II topoisomerases break and join 2 DNA strands simultaneously in an ATP-dependent manner. This chain is DNA gyrase subunit B, found in Archaeoglobus fulgidus (strain ATCC 49558 / DSM 4304 / JCM 9628 / NBRC 100126 / VC-16).